A 150-amino-acid chain; its full sequence is UPF0178 protein Rru_A0086 (150 aa).

The protein belongs to the UPF0178 family.

The polypeptide is UPF0178 protein Rru_A0086 (Rhodospirillum rubrum (strain ATCC 11170 / ATH 1.1.1 / DSM 467 / LMG 4362 / NCIMB 8255 / S1)).